The following is a 360-amino-acid chain: Phenylalanine--tRNA ligase alpha subunit (360 aa).

E260 is a binding site for Mg(2+).

The protein belongs to the class-II aminoacyl-tRNA synthetase family. Phe-tRNA synthetase alpha subunit type 1 subfamily. As to quaternary structure, tetramer of two alpha and two beta subunits. Mg(2+) is required as a cofactor.

The protein resides in the cytoplasm. It catalyses the reaction tRNA(Phe) + L-phenylalanine + ATP = L-phenylalanyl-tRNA(Phe) + AMP + diphosphate + H(+). This Beijerinckia indica subsp. indica (strain ATCC 9039 / DSM 1715 / NCIMB 8712) protein is Phenylalanine--tRNA ligase alpha subunit.